The chain runs to 1200 residues: uncharacterized protein (1200 aa).

Disordered stretches follow at residues 282 to 302 (SQES…GCTS), 323 to 372 (LSEA…PQGS), 392 to 491 (SQEP…KASL), 510 to 568 (RAKS…RIGA), and 1056 to 1200 (SCPE…LASL). A compositionally biased stretch (low complexity) spans 420–435 (ASSPRLSPASPAAAAS). Residues 437 to 448 (TKIEVKTKERNG) are compositionally biased toward basic and acidic residues. Polar residues predominate over residues 518-527 (GTTQTKTSGP). The span at 1137–1153 (EDGKGSHKLPDPAREHL) shows a compositional bias: basic and acidic residues. The segment covering 1160-1171 (RQQPPRQSQVPR) has biased composition (low complexity). Residues 1175–1200 (GSFSSEGTDSQTSLEDSPQTSPLASL) show a composition bias toward polar residues.

This is an uncharacterized protein from Homo sapiens (Human).